Consider the following 1479-residue polypeptide: Chromosome partition protein MukB (1479 aa).

Residue 34–41 (GGNGAGKS) participates in ATP binding. 2 coiled-coil regions span residues 138-163 (ETLN…MEGV) and 331-664 (QAAS…RLSQ). The flexible hinge stretch occupies residues 665 to 782 (PGGSEDPRLN…ALPLFGRAAR (118 aa)). Coiled coils occupy residues 831–1112 (DDPE…TAKA) and 1206–1257 (VEAI…MLNQ).

It belongs to the SMC family. MukB subfamily. In terms of assembly, homodimerization via its hinge domain. Binds to DNA via its C-terminal region. Interacts, and probably forms a ternary complex, with MukE and MukF via its C-terminal region. The complex formation is stimulated by calcium or magnesium. Interacts with tubulin-related protein FtsZ.

It is found in the cytoplasm. The protein localises to the nucleoid. In terms of biological role, plays a central role in chromosome condensation, segregation and cell cycle progression. Functions as a homodimer, which is essential for chromosome partition. Involved in negative DNA supercoiling in vivo, and by this means organize and compact chromosomes. May achieve or facilitate chromosome segregation by condensation DNA from both sides of a centrally located replisome during cell division. The polypeptide is Chromosome partition protein MukB (Klebsiella pneumoniae).